The following is a 389-amino-acid chain: Probable tRNA pseudouridine synthase D 1 (389 aa).

D63 acts as the Nucleophile in catalysis. Residues 135–345 (GAPNYYDDQR…KYTKRPIISI (211 aa)) form the TRUD domain.

This sequence belongs to the pseudouridine synthase TruD family.

The catalysed reaction is uridine(13) in tRNA = pseudouridine(13) in tRNA. In terms of biological role, could be responsible for synthesis of pseudouridine from uracil-13 in transfer RNAs. This Methanococcus maripaludis (strain DSM 14266 / JCM 13030 / NBRC 101832 / S2 / LL) protein is Probable tRNA pseudouridine synthase D 1 (truD1).